The sequence spans 249 residues: Granaticin polyketide synthase putative ketoacyl reductase 2 (249 aa).

Position 12–36 (12–36) interacts with NAD(+); sequence LVTGSSSGIGQTVAQRLAAEGYRVV. Serine 144 contacts substrate. The active-site Proton acceptor is the tyrosine 157.

It belongs to the short-chain dehydrogenases/reductases (SDR) family.

Its pathway is antibiotic biosynthesis; granaticin biosynthesis. This is Granaticin polyketide synthase putative ketoacyl reductase 2 (gra-orf6) from Streptomyces violaceoruber.